A 276-amino-acid polypeptide reads, in one-letter code: Nickel import system permease protein NikC (276 aa).

Helical transmembrane passes span 10-30 (LIFF…FFVS), 73-93 (LFVT…LGLF), 108-128 (FIDV…ASFF), 186-206 (IIPA…LYIS), and 238-258 (IMLI…NLTG). The ABC transmembrane type-1 domain occupies 69–258 (ARSTLFVTVL…ITILIFNLTG (190 aa)).

It belongs to the binding-protein-dependent transport system permease family. OppBC subfamily. The complex is composed of two ATP-binding proteins (NikD and NikE), two transmembrane proteins (NikB and NikC) and a solute-binding protein (NikA).

Its subcellular location is the cell membrane. Functionally, part of the ABC transporter complex NikABCDE (Opp2) involved in nickel import. Probably responsible for the translocation of the substrate across the membrane. In Staphylococcus aureus (strain USA300), this protein is Nickel import system permease protein NikC.